The sequence spans 166 residues: Phosphopantetheine adenylyltransferase (166 aa).

Ser11 is a binding site for substrate. ATP-binding positions include 11–12 (SF) and His19. Residues Lys43, Val80, and Arg94 each contribute to the substrate site. Residues 95–97 (GLR), Glu105, and 130–136 (VRTITAT) contribute to the ATP site.

Belongs to the bacterial CoaD family. Homohexamer. It depends on Mg(2+) as a cofactor.

It localises to the cytoplasm. The enzyme catalyses (R)-4'-phosphopantetheine + ATP + H(+) = 3'-dephospho-CoA + diphosphate. Its pathway is cofactor biosynthesis; coenzyme A biosynthesis; CoA from (R)-pantothenate: step 4/5. In terms of biological role, reversibly transfers an adenylyl group from ATP to 4'-phosphopantetheine, yielding dephospho-CoA (dPCoA) and pyrophosphate. The protein is Phosphopantetheine adenylyltransferase of Mesorhizobium japonicum (strain LMG 29417 / CECT 9101 / MAFF 303099) (Mesorhizobium loti (strain MAFF 303099)).